A 473-amino-acid polypeptide reads, in one-letter code: Proline transporter 1 (473 aa).

The span at 1 to 11 (MDQHQLDEENQ) shows a compositional bias: basic and acidic residues. The segment at 1–31 (MDQHQLDEENQRAALFHSSAPSSSLGADGEE) is disordered. The next 11 helical transmembrane spans lie at 65-85 (PWYQVGFILTTGVNSAYVLGY), 88-108 (SIMVPLGWIGGTCGLILAAAI), 145-165 (LTWALQYVNLFMINTGLIILA), 188-208 (IALSGFVCALFAFGIPYLSAL), 210-230 (IWLGLSTVFSLIYIMIAFVMS), 252-272 (IFTTIGAVANLVFAYNTGMLP), 290-310 (LWFQFTVGSLPLYAVTFMGYW), 333-353 (VANLSAFLQTVIALHIFASPM), 378-398 (VGVRGGYLTVNTLVAAMLPFL), 401-421 (FMSLTGALSTFPLTFVLANHM), and 437-457 (WHWLNVVGFSCLSVAAAVAAV).

Belongs to the amino acid/polyamine transporter 2 family. Amino acid/auxin permease (AAAP) (TC 2.A.18.3) subfamily. As to expression, expressed in roots, leaf blades and sheaths, stems and young panicle.

It localises to the cell membrane. Proline transporter that mediates proline transport across the plasma membrane when expressed in a heterologous system (Xenopus oocytes). This Oryza sativa subsp. japonica (Rice) protein is Proline transporter 1 (PROT1).